A 411-amino-acid chain; its full sequence is G2/mitotic-specific cyclin cig2 (411 aa).

The short motif at 51 to 60 (RTVLSDVSNV) is the Destruction box element. Positions 57–89 (VSNVGKNNADEKDTKKAKRSFDESNLSTNEEAD) are disordered. The span at 64-78 (NADEKDTKKAKRSFD) shows a compositional bias: basic and acidic residues. Residues 139–265 (EIFEYIRKLD…MLNVLNFDLS (127 aa)) enclose the Cyclin N-terminal domain. An interaction with pop1 region spans residues 181 to 273 (SNFCLMPETL…LSYPSPLNFL (93 aa)).

This sequence belongs to the cyclin family. Cyclin AB subfamily. Associates with cdc2, res2 and rum1. Interacts with pop1 only when phosphorylated. In terms of processing, phosphorylated.

The protein resides in the nucleus. It is found in the cytoplasm. The protein localises to the cytoskeleton. It localises to the microtubule organizing center. Its subcellular location is the spindle pole body. In terms of biological role, essential for the control of the cell cycle at the G2/M and G1/S (mitosis) transition. Interacts with the cdc2 protein kinase to form MPF. Interaction with res2 promotes the phosphorylation of res1 and inhibits MBF-dependent gene transcription. Forms an autoregulating feedback-inhibition loop with MBF which is important for normal regulation of the cell cycle. G2/M cyclins accumulate steadily during G2 and are abruptly destroyed at mitosis. Negatively regulates conjugation via interacting with cell cycle 'start' genes. Degraded by skp1, pop1 and pop2 in the G2 and M phases of the cell cycle. In Schizosaccharomyces pombe (strain 972 / ATCC 24843) (Fission yeast), this protein is G2/mitotic-specific cyclin cig2 (cig2).